We begin with the raw amino-acid sequence, 254 residues long: Pyridoxine 5'-phosphate synthase (254 aa).

Asn12 is a binding site for 3-amino-2-oxopropyl phosphate. 1-deoxy-D-xylulose 5-phosphate is bound at residue 14–15 (DH). Arg23 lines the 3-amino-2-oxopropyl phosphate pocket. His48 (proton acceptor) is an active-site residue. 2 residues coordinate 1-deoxy-D-xylulose 5-phosphate: Arg50 and His55. Glu75 acts as the Proton acceptor in catalysis. Thr105 contributes to the 1-deoxy-D-xylulose 5-phosphate binding site. The active-site Proton donor is His199. Residues Gly200 and 221–222 (GF) contribute to the 3-amino-2-oxopropyl phosphate site.

Belongs to the PNP synthase family. As to quaternary structure, homooctamer; tetramer of dimers.

The protein resides in the cytoplasm. It catalyses the reaction 3-amino-2-oxopropyl phosphate + 1-deoxy-D-xylulose 5-phosphate = pyridoxine 5'-phosphate + phosphate + 2 H2O + H(+). The protein operates within cofactor biosynthesis; pyridoxine 5'-phosphate biosynthesis; pyridoxine 5'-phosphate from D-erythrose 4-phosphate: step 5/5. Catalyzes the complicated ring closure reaction between the two acyclic compounds 1-deoxy-D-xylulose-5-phosphate (DXP) and 3-amino-2-oxopropyl phosphate (1-amino-acetone-3-phosphate or AAP) to form pyridoxine 5'-phosphate (PNP) and inorganic phosphate. The chain is Pyridoxine 5'-phosphate synthase from Rhodopseudomonas palustris (strain ATCC BAA-98 / CGA009).